We begin with the raw amino-acid sequence, 318 residues long: NADH-ubiquinone oxidoreductase chain 1 (318 aa).

Transmembrane regions (helical) follow at residues Pro-2–Leu-22, Ile-68–Pro-88, Leu-100–Gly-120, Leu-146–Val-166, His-171–Ala-191, Ile-213–Met-233, Glu-253–Ile-273, and Leu-285–Ile-305.

Belongs to the complex I subunit 1 family. As to quaternary structure, core subunit of respiratory chain NADH dehydrogenase (Complex I) which is composed of 45 different subunits.

The protein resides in the mitochondrion inner membrane. The enzyme catalyses a ubiquinone + NADH + 5 H(+)(in) = a ubiquinol + NAD(+) + 4 H(+)(out). Core subunit of the mitochondrial membrane respiratory chain NADH dehydrogenase (Complex I) which catalyzes electron transfer from NADH through the respiratory chain, using ubiquinone as an electron acceptor. Essential for the catalytic activity and assembly of complex I. The polypeptide is NADH-ubiquinone oxidoreductase chain 1 (MT-ND1) (Pan troglodytes (Chimpanzee)).